A 478-amino-acid polypeptide reads, in one-letter code: Endoplasmic reticulum oxidoreductin-1 (478 aa).

An N-terminal signal peptide occupies residues 1–20 (MREPLLQLIVLSLIIIVVNT). 6 cysteine pairs are disulfide-bonded: cysteine 28–cysteine 41, cysteine 30–cysteine 39, cysteine 79–cysteine 384, cysteine 88–cysteine 93, cysteine 209–cysteine 230, and cysteine 387–cysteine 390. The tract at residues 117 to 143 (AAVKEEEDDDAEKCADAGNNIDPMDRT) is disordered. FAD is bound by residues arginine 188, threonine 190, and tryptophan 201. Serine 241, histidine 244, arginine 283, and arginine 295 together coordinate FAD. Residue asparagine 377 is glycosylated (N-linked (GlcNAc...) asparagine). The interval 459–478 (ESVMNTAADGPPRKSNKIDL) is disordered.

The protein belongs to the EROs family. As to quaternary structure, may function both as a monomer and a homodimer. FAD serves as cofactor.

It is found in the endoplasmic reticulum membrane. Functionally, oxidoreductase involved in disulfide bond formation in the endoplasmic reticulum. Efficiently reoxidizes pdi-1, the enzyme catalyzing protein disulfide formation, in order to allow pdi-1 to sustain additional rounds of disulfide formation. Following pdi reoxidation, passes its electrons to molecular oxygen via FAD, leading to the production of reactive oxygen species (ROS) in the cell. This is Endoplasmic reticulum oxidoreductin-1 (ero-1) from Caenorhabditis elegans.